The primary structure comprises 418 residues: Lariat debranching enzyme (418 aa).

The a divalent metal cation site is built by cysteine 8, histidine 10, aspartate 39, and asparagine 84. The tract at residues 124–154 (SGIYNERHYRSGHFERPPYNESTIRSVYHVR) is lariat recognition loop. Histidine 174, histidine 226, and histidine 228 together coordinate a divalent metal cation. The tract at residues 372 to 418 (GERTDIPASLAPSDLPTYDSEEIPIDDIDEIEEMEEAKADDHTRDDA) is disordered. Positions 390–406 (DSEEIPIDDIDEIEEME) are enriched in acidic residues. Basic and acidic residues predominate over residues 407–418 (EAKADDHTRDDA).

This sequence belongs to the lariat debranching enzyme family. It depends on Fe(2+) as a cofactor. Requires Zn(2+) as cofactor. Mn(2+) is required as a cofactor. Widely expressed. Expressed in roots, stems, cauline and rosette leaves, flower buds and siliques.

The protein localises to the nucleus. Its activity is regulated as follows. Active in presence of diverse metals including Fe(2+), Zn(2+), Mn(2+). Binds two metal cations in two adjacent alpha and beta metal-binding pockets. Cleaves the 2'-5' phosphodiester linkage at the branch point of lariat intron pre-mRNAs after splicing and converts them into linear molecules that are subsequently degraded. It thereby facilitates ribonucleotide turnover. It may also participate in retrovirus replication via an RNA lariat intermediate in cDNA synthesis. Plays en essential role during embryogenesis. This is Lariat debranching enzyme (DBR1) from Arabidopsis thaliana (Mouse-ear cress).